Reading from the N-terminus, the 274-residue chain is 2-dehydro-3-deoxyphosphooctonate aldolase (274 aa).

It belongs to the KdsA family.

The protein resides in the cytoplasm. It catalyses the reaction D-arabinose 5-phosphate + phosphoenolpyruvate + H2O = 3-deoxy-alpha-D-manno-2-octulosonate-8-phosphate + phosphate. It participates in carbohydrate biosynthesis; 3-deoxy-D-manno-octulosonate biosynthesis; 3-deoxy-D-manno-octulosonate from D-ribulose 5-phosphate: step 2/3. It functions in the pathway bacterial outer membrane biogenesis; lipopolysaccharide biosynthesis. In Legionella pneumophila (strain Corby), this protein is 2-dehydro-3-deoxyphosphooctonate aldolase.